Here is an 82-residue protein sequence, read N- to C-terminus: Delta-ctenitoxin-Pn1a (82 aa).

The first 16 residues, 1-16 (MKVAIVFLSLLVLAFA), serve as a signal peptide directing secretion. The propeptide occupies 17–34 (SESIEENREEFPVEESAR). 5 disulfides stabilise this stretch: Cys35–Cys49, Cys42–Cys55, Cys46–Cys82, Cys48–Cys65, and Cys57–Cys63.

It belongs to the neurotoxin 03 (Tx2) family. 05 subfamily. Expressed by the venom gland.

Its subcellular location is the secreted. This neurotoxin binds at site 3 of insect voltage-activated sodium channels (Nav) and prolongs evoked axonal action potentials by a slowing down of sodium current inactivation. The toxin also inhibits glutamate uptake from rat brain synaptosomes. It reversibly inhibits the N-methyl-D-aspartate (NMDA)-subtype of ionotropic glutamate receptor (GRIN). In addition, the toxin shows antinociceptive effect in all rat pain models tested (inflammatory, neuropathic and nociceptive). The antinociceptive effect is partially blocked when selective antagonists of both mu- and delta-opioid receptors are administered, revealing that the antinociceptive effect of the toxin involves both opioid and cannabinoid endogenous systems. In vivo, it is highly toxic to house fly (Musca domestica), toxic to cockroach, but has no effect when intracerebroventricularly injected into mice. In Phoneutria nigriventer (Brazilian armed spider), this protein is Delta-ctenitoxin-Pn1a.